We begin with the raw amino-acid sequence, 155 residues long: Endoribonuclease YbeY (155 aa).

Positions 113, 117, and 123 each coordinate Zn(2+).

The protein belongs to the endoribonuclease YbeY family. Requires Zn(2+) as cofactor.

It localises to the cytoplasm. Its function is as follows. Single strand-specific metallo-endoribonuclease involved in late-stage 70S ribosome quality control and in maturation of the 3' terminus of the 16S rRNA. This chain is Endoribonuclease YbeY, found in Ureaplasma urealyticum serovar 10 (strain ATCC 33699 / Western).